The following is a 283-amino-acid chain: Urease accessory protein UreD 2 (283 aa).

Basic and acidic residues predominate over residues 1–11 (MGRRAPDRLDR). Positions 1 to 30 (MGRRAPDRLDRGVTTTSPRTQAPPQAGRGV) are disordered. Residues 13 to 23 (VTTTSPRTQAP) show a composition bias toward polar residues.

It belongs to the UreD family. UreD, UreF and UreG form a complex that acts as a GTP-hydrolysis-dependent molecular chaperone, activating the urease apoprotein by helping to assemble the nickel containing metallocenter of UreC. The UreE protein probably delivers the nickel.

It is found in the cytoplasm. In terms of biological role, required for maturation of urease via the functional incorporation of the urease nickel metallocenter. The polypeptide is Urease accessory protein UreD 2 (Saccharopolyspora erythraea (strain ATCC 11635 / DSM 40517 / JCM 4748 / NBRC 13426 / NCIMB 8594 / NRRL 2338)).